A 607-amino-acid chain; its full sequence is Glutamine--fructose-6-phosphate aminotransferase [isomerizing] (607 aa).

Residue Cys2 is the Nucleophile; for GATase activity of the active site. In terms of domain architecture, Glutamine amidotransferase type-2 spans 2–217 (CGIIGIIGND…DGDWAVLTRN (216 aa)). 2 SIS domains span residues 283 to 422 (IGID…ARGA) and 455 to 597 (VCHD…VDQP). Lys602 acts as the For Fru-6P isomerization activity in catalysis.

As to quaternary structure, homodimer.

Its subcellular location is the cytoplasm. The enzyme catalyses D-fructose 6-phosphate + L-glutamine = D-glucosamine 6-phosphate + L-glutamate. Catalyzes the first step in hexosamine metabolism, converting fructose-6P into glucosamine-6P using glutamine as a nitrogen source. The polypeptide is Glutamine--fructose-6-phosphate aminotransferase [isomerizing] (Brucella abortus biovar 1 (strain 9-941)).